A 132-amino-acid polypeptide reads, in one-letter code: Large-conductance mechanosensitive channel (132 aa).

2 helical membrane passes run 11–31 and 75–95; these read FISRGNALDLAVGVVIGGAFG and GSFLQAVFDFVIIAFAIFLLV.

The protein belongs to the MscL family. In terms of assembly, homopentamer.

It is found in the cell inner membrane. In terms of biological role, channel that opens in response to stretch forces in the membrane lipid bilayer. May participate in the regulation of osmotic pressure changes within the cell. In Synechococcus sp. (strain JA-3-3Ab) (Cyanobacteria bacterium Yellowstone A-Prime), this protein is Large-conductance mechanosensitive channel.